Reading from the N-terminus, the 329-residue chain is Protein-arginine N-acetylglucosaminyltransferase NleB1 (329 aa).

Arg13 carries N-beta-linked (GlcNAc) arginine; by autocatalysis glycosylation. Residue 48–50 (QWF) coordinates UDP-N-acetyl-alpha-D-glucosamine. An N-beta-linked (GlcNAc) arginine; by autocatalysis glycan is attached at Arg53. Position 72 (Tyr72) interacts with UDP-N-acetyl-alpha-D-glucosamine. The N-beta-linked (GlcNAc) arginine; by autocatalysis glycan is linked to Arg159. UDP-N-acetyl-alpha-D-glucosamine is bound at residue 219 to 222 (YLDA). Positions 221–223 (DAD) match the DXD motif motif. Residue Asp223 participates in Mn(2+) binding. Glu253 serves as the catalytic Proton acceptor. N-beta-linked (GlcNAc) arginine; by autocatalysis glycosylation occurs at Arg293. Positions 320 and 322 each coordinate Mn(2+). UDP-N-acetyl-alpha-D-glucosamine-binding positions include Ser322 and 327–329 (SSW).

The protein belongs to the glycosyltransferase NleB family. Requires Mn(2+) as cofactor. Auto-glycosylated: arginine GlcNAcylation is required for activity toward death domain-containing host target proteins.

It is found in the secreted. The protein localises to the host cytoplasm. It carries out the reaction L-arginyl-[protein] + UDP-N-acetyl-alpha-D-glucosamine = N(omega)-(N-acetyl-beta-D-glucosaminyl)-L-arginyl-[protein] + UDP + H(+). Functionally, protein-arginine N-acetylglucosaminyltransferase effector that disrupts TNF signaling in infected cells, including NF-kappa-B signaling, apoptosis and necroptosis. Acts by catalyzing the transfer of a single N-acetylglucosamine (GlcNAc) to a conserved arginine residue in the death domain of host proteins FADD, TRADD, FAS, TNFRSF1A/TNFR1, TNFRSF25/DR3 and RIPK1: arginine GlcNAcylation prevents homotypic/heterotypic death domain interactions and assembly of the oligomeric TNF-alpha receptor complex, thereby disrupting TNF signaling. Has preference for host FADD as substrate compared to other death domain-containing proteins. Also acts on host proteins without a death domain: catalyzes arginine GlcNAcylation of HIF1A, thereby regulating host glucose metabolism. Also displays intra-bacterial activity by mediating GlcNAcylation of glutathione synthetase GshB. Catalyzes auto-GlcNAcylation, which is required for activity toward death domain-containing host target proteins. Shows a higher enzymatic activity than NleB2. The polypeptide is Protein-arginine N-acetylglucosaminyltransferase NleB1 (Escherichia coli O127:H6 (strain E2348/69 / EPEC)).